The primary structure comprises 334 residues: Zinc finger Ran-binding domain-containing protein 2 (334 aa).

RanBP2-type zinc fingers lie at residues 9–40 (SDGD…EKTT) and 65–94 (SAND…PKYA). The segment at 117–334 (REESDGEYDE…SGSRTSSKKK (218 aa)) is disordered. Residues 150–163 (DKESEGEDEEDEDG) show a composition bias toward acidic residues. The segment covering 196 to 212 (KKKKSNRRSRSKSRSSH) has biased composition (basic residues). Low complexity-rich tracts occupy residues 213 to 224 (SRSSSRSSSHSS) and 258 to 285 (SRSS…SSSP). The segment covering 302–318 (RKKRRSRSRSPERRRRS) has biased composition (basic residues). The span at 319–334 (SSGSSHSGSRTSSKKK) shows a compositional bias: low complexity.

This sequence belongs to the ZRANB2 family.

It localises to the nucleus. In terms of biological role, may regulate alternative splicing by interfering with constitutive 5'-splice site selection. The polypeptide is Zinc finger Ran-binding domain-containing protein 2 (Gallus gallus (Chicken)).